The primary structure comprises 84 residues: Large ribosomal subunit protein bL27 (84 aa).

A disordered region spans residues 1–20 (MAHKKGGGSTKNGRDSNPKY).

It belongs to the bacterial ribosomal protein bL27 family.

This chain is Large ribosomal subunit protein bL27, found in Chlorobaculum tepidum (strain ATCC 49652 / DSM 12025 / NBRC 103806 / TLS) (Chlorobium tepidum).